The chain runs to 354 residues: Holliday junction branch migration complex subunit RuvB (354 aa).

The tract at residues 1 to 183 (MTGDNLVSAY…FGFVAHLDFY (183 aa)) is large ATPase domain (RuvB-L). ATP contacts are provided by residues Arg23, Gly64, Lys67, Thr68, Ser69, 130-132 (EDF), Arg173, Tyr183, and Arg220. Residue Thr68 coordinates Mg(2+). A small ATPAse domain (RuvB-S) region spans residues 184-254 (SPADLETLLH…AARAALLVYD (71 aa)). The segment at 257–354 (ALGLDRLDRQ…DLFSVEPDQP (98 aa)) is head domain (RuvB-H). Arg312 and Arg317 together coordinate DNA. The interval 330 to 354 (TPPNGIFGSDAPPASDLFSVEPDQP) is disordered.

The protein belongs to the RuvB family. As to quaternary structure, homohexamer. Forms an RuvA(8)-RuvB(12)-Holliday junction (HJ) complex. HJ DNA is sandwiched between 2 RuvA tetramers; dsDNA enters through RuvA and exits via RuvB. An RuvB hexamer assembles on each DNA strand where it exits the tetramer. Each RuvB hexamer is contacted by two RuvA subunits (via domain III) on 2 adjacent RuvB subunits; this complex drives branch migration. In the full resolvosome a probable DNA-RuvA(4)-RuvB(12)-RuvC(2) complex forms which resolves the HJ.

The protein localises to the cytoplasm. It catalyses the reaction ATP + H2O = ADP + phosphate + H(+). The RuvA-RuvB-RuvC complex processes Holliday junction (HJ) DNA during genetic recombination and DNA repair, while the RuvA-RuvB complex plays an important role in the rescue of blocked DNA replication forks via replication fork reversal (RFR). RuvA specifically binds to HJ cruciform DNA, conferring on it an open structure. The RuvB hexamer acts as an ATP-dependent pump, pulling dsDNA into and through the RuvAB complex. RuvB forms 2 homohexamers on either side of HJ DNA bound by 1 or 2 RuvA tetramers; 4 subunits per hexamer contact DNA at a time. Coordinated motions by a converter formed by DNA-disengaged RuvB subunits stimulates ATP hydrolysis and nucleotide exchange. Immobilization of the converter enables RuvB to convert the ATP-contained energy into a lever motion, pulling 2 nucleotides of DNA out of the RuvA tetramer per ATP hydrolyzed, thus driving DNA branch migration. The RuvB motors rotate together with the DNA substrate, which together with the progressing nucleotide cycle form the mechanistic basis for DNA recombination by continuous HJ branch migration. Branch migration allows RuvC to scan DNA until it finds its consensus sequence, where it cleaves and resolves cruciform DNA. This is Holliday junction branch migration complex subunit RuvB from Salinispora arenicola (strain CNS-205).